A 327-amino-acid polypeptide reads, in one-letter code: Glycerol-3-phosphate dehydrogenase [NAD(P)+] (327 aa).

NADPH-binding residues include Trp-16, Arg-36, and Lys-108. Sn-glycerol 3-phosphate is bound by residues Lys-108, Gly-136, and Ser-138. Ala-140 contacts NADPH. Lys-191, Asp-244, Ser-254, Arg-255, and Asn-256 together coordinate sn-glycerol 3-phosphate. Lys-191 functions as the Proton acceptor in the catalytic mechanism. Position 255 (Arg-255) interacts with NADPH. Residues Leu-274 and Glu-276 each coordinate NADPH.

The protein belongs to the NAD-dependent glycerol-3-phosphate dehydrogenase family.

Its subcellular location is the cytoplasm. It carries out the reaction sn-glycerol 3-phosphate + NAD(+) = dihydroxyacetone phosphate + NADH + H(+). The enzyme catalyses sn-glycerol 3-phosphate + NADP(+) = dihydroxyacetone phosphate + NADPH + H(+). The protein operates within membrane lipid metabolism; glycerophospholipid metabolism. Catalyzes the reduction of the glycolytic intermediate dihydroxyacetone phosphate (DHAP) to sn-glycerol 3-phosphate (G3P), the key precursor for phospholipid synthesis. This Bradyrhizobium sp. (strain ORS 278) protein is Glycerol-3-phosphate dehydrogenase [NAD(P)+].